A 137-amino-acid chain; its full sequence is Sec-independent protein translocase protein TatB (137 aa).

The helical transmembrane segment at F2–G22 threads the bilayer. Positions F92 to T137 are disordered. Residues T122–P131 show a composition bias toward low complexity.

It belongs to the TatB family. In terms of assembly, the Tat system comprises two distinct complexes: a TatABC complex, containing multiple copies of TatA, TatB and TatC subunits, and a separate TatA complex, containing only TatA subunits. Substrates initially bind to the TatABC complex, which probably triggers association of the separate TatA complex to form the active translocon.

It localises to the cell membrane. Its function is as follows. Part of the twin-arginine translocation (Tat) system that transports large folded proteins containing a characteristic twin-arginine motif in their signal peptide across membranes. Together with TatC, TatB is part of a receptor directly interacting with Tat signal peptides. TatB may form an oligomeric binding site that transiently accommodates folded Tat precursor proteins before their translocation. In Mycobacterium sp. (strain JLS), this protein is Sec-independent protein translocase protein TatB.